The sequence spans 529 residues: Potassium voltage-gated channel subfamily A member 6 (529 aa).

The interval methionine 1–glycine 33 is disordered. Topologically, residues methionine 1–glycine 171 are cytoplasmic. Position 3 is a phosphoserine (serine 3). The chain crosses the membrane as a helical span at residues proline 172–leucine 193. Residues glutamate 194 to proline 262 are Extracellular-facing. Residues glycine 210–glycine 220 are compositionally biased toward low complexity. A disordered region spans residues glycine 210–threonine 233. Residues phenylalanine 263 to alanine 284 form a helical membrane-spanning segment. Cysteine 285 carries the S-palmitoyl cysteine lipid modification. Residues cysteine 285 to isoleucine 295 are Cytoplasmic-facing. A helical membrane pass occupies residues methionine 296–valine 316. Topologically, residues glutamine 317 to serine 337 are extracellular. Residues leucine 338–histidine 358 form a helical; Voltage-sensor membrane-spanning segment. At serine 359–methionine 373 the chain is on the cytoplasmic side. The tract at residues lysine 360–methionine 373 is S4-S5 linker. Residues arginine 374 to tyrosine 395 traverse the membrane as a helical segment. Over phenylalanine 396–isoleucine 409 the chain is Extracellular. The helical intramembrane region spans proline 410–threonine 421. Residues threonine 422–aspartate 427 carry the Selectivity filter motif. Residues threonine 422–tyrosine 429 lie within the membrane without spanning it. Topologically, residues proline 430–lysine 436 are extracellular. Residues isoleucine 437–tyrosine 465 form a helical membrane-spanning segment. The Cytoplasmic segment spans residues histidine 466 to valine 529. Positions aspartate 488–leucine 513 are disordered. Positions aspartate 500 to proline 510 are enriched in basic and acidic residues. At serine 511 the chain carries Phosphoserine; by PKA. The PDZ-binding signature appears at threonine 527–valine 529.

It belongs to the potassium channel family. A (Shaker) (TC 1.A.1.2) subfamily. Kv1.6/KCNA6 sub-subfamily. Homotetramer and heterotetramer of potassium channel proteins. Interacts with KCNAB1 and KCNAB2.

The protein resides in the cell membrane. It catalyses the reaction K(+)(in) = K(+)(out). In terms of biological role, voltage-gated potassium channel that mediates transmembrane potassium transport in excitable membranes. Forms tetrameric potassium-selective channels through which potassium ions pass in accordance with their electrochemical gradient. The channel alternates between opened and closed conformations in response to the voltage difference across the membrane. Can form functional homotetrameric channels and heterotetrameric channels that contain variable proportions of KCNA1, KCNA2, KCNA4, KCNA6, and possibly other family members as well; channel properties depend on the type of alpha subunits that are part of the channel. Channel properties are modulated by cytoplasmic beta subunits that regulate the subcellular location of the alpha subunits and promote rapid inactivation. Homotetrameric channels display rapid activation and slow inactivation. The polypeptide is Potassium voltage-gated channel subfamily A member 6 (KCNA6) (Homo sapiens (Human)).